Reading from the N-terminus, the 176-residue chain is Ribosome rescue factor SmrB (176 aa).

The 76-residue stretch at leucine 93 to aspartate 168 folds into the Smr domain.

Belongs to the SmrB family. As to quaternary structure, associates with collided ribosomes, but not with correctly translating polysomes.

In terms of biological role, acts as a ribosome collision sensor. Detects stalled/collided disomes (pairs of ribosomes where the leading ribosome is stalled and a second ribosome has collided with it) and endonucleolytically cleaves mRNA at the 5' boundary of the stalled ribosome. Stalled/collided disomes form a new interface (primarily via the 30S subunits) that binds SmrB. Cleaved mRNA becomes available for tmRNA ligation, leading to ribosomal subunit dissociation and rescue of stalled ribosomes. The polypeptide is Ribosome rescue factor SmrB (Shewanella sp. (strain W3-18-1)).